Consider the following 71-residue polypeptide: Small ribosomal subunit protein bS21 (71 aa).

Residues 37–71 (HYEKPTQERKRKAAAAVKRHMKRLSREQARRRRLY) form a disordered region. The segment covering 45–71 (RKRKAAAAVKRHMKRLSREQARRRRLY) has biased composition (basic residues).

It belongs to the bacterial ribosomal protein bS21 family.

The chain is Small ribosomal subunit protein bS21 from Alkalilimnicola ehrlichii (strain ATCC BAA-1101 / DSM 17681 / MLHE-1).